Here is a 53-residue protein sequence, read N- to C-terminus: Small ribosomal subunit protein uS14 (53 aa).

Zn(2+) contacts are provided by Cys-18, Cys-21, Cys-36, and Cys-39.

It belongs to the universal ribosomal protein uS14 family. Zinc-binding uS14 subfamily. As to quaternary structure, part of the 30S ribosomal subunit. It depends on Zn(2+) as a cofactor.

In terms of biological role, binds 16S rRNA, required for the assembly of 30S particles. The sequence is that of Small ribosomal subunit protein uS14 from Thermoplasma volcanium (strain ATCC 51530 / DSM 4299 / JCM 9571 / NBRC 15438 / GSS1).